A 302-amino-acid polypeptide reads, in one-letter code: Deubiquitinase OTUD6B (302 aa).

The span at 1 to 10 (MEGSEDEEAE) shows a compositional bias: acidic residues. 2 disordered regions span residues 1–52 (MEGS…KQLA) and 99–121 (EQQI…AALE). Basic residues predominate over residues 106-116 (RISKAQKRREK). Positions 156–293 (LEIKQIPSDG…GEHYNSVKLL (138 aa)) constitute an OTU domain. A cys-loop region spans residues 161-167 (IPSDGHC). Asp-164 is a catalytic residue. Cys-167 (nucleophile) is an active-site residue. The variable-loop stretch occupies residues 228-238 (IANTAAWGGQL). A his-loop region spans residues 276 to 286 (YMRHAYGLGEH). His-286 is an active-site residue.

The catalysed reaction is Thiol-dependent hydrolysis of ester, thioester, amide, peptide and isopeptide bonds formed by the C-terminal Gly of ubiquitin (a 76-residue protein attached to proteins as an intracellular targeting signal).. Deubiquitinating enzyme that may play a role in the ubiquitin-dependent regulation of different cellular processes. The polypeptide is Deubiquitinase OTUD6B (OTUD6B) (Gallus gallus (Chicken)).